We begin with the raw amino-acid sequence, 216 residues long: LexA repressor (216 aa).

Positions 28–48 (RAEIAAELGFSSANSAEEHLR) form a DNA-binding region, H-T-H motif. Residues S134 and K171 each act as for autocatalytic cleavage activity in the active site.

The protein belongs to the peptidase S24 family. As to quaternary structure, homodimer.

The catalysed reaction is Hydrolysis of Ala-|-Gly bond in repressor LexA.. Its function is as follows. Represses a number of genes involved in the response to DNA damage (SOS response), including recA and lexA. In the presence of single-stranded DNA, RecA interacts with LexA causing an autocatalytic cleavage which disrupts the DNA-binding part of LexA, leading to derepression of the SOS regulon and eventually DNA repair. In Paraburkholderia xenovorans (strain LB400), this protein is LexA repressor.